A 444-amino-acid polypeptide reads, in one-letter code: tRNA modification GTPase MnmE (444 aa).

(6S)-5-formyl-5,6,7,8-tetrahydrofolate-binding residues include arginine 21, glutamate 79, and lysine 118. Residues glycine 215 to lysine 365 form the TrmE-type G domain. Asparagine 225 contributes to the K(+) binding site. GTP-binding positions include asparagine 225–serine 230, serine 244–threonine 250, and aspartate 269–glycine 272. Serine 229 lines the Mg(2+) pocket. Residues serine 244, isoleucine 246, and threonine 249 each contribute to the K(+) site. Threonine 250 is a Mg(2+) binding site. A (6S)-5-formyl-5,6,7,8-tetrahydrofolate-binding site is contributed by lysine 444.

Belongs to the TRAFAC class TrmE-Era-EngA-EngB-Septin-like GTPase superfamily. TrmE GTPase family. As to quaternary structure, homodimer. Heterotetramer of two MnmE and two MnmG subunits. Requires K(+) as cofactor.

The protein resides in the cytoplasm. Its function is as follows. Exhibits a very high intrinsic GTPase hydrolysis rate. Involved in the addition of a carboxymethylaminomethyl (cmnm) group at the wobble position (U34) of certain tRNAs, forming tRNA-cmnm(5)s(2)U34. This Malacoplasma penetrans (strain HF-2) (Mycoplasma penetrans) protein is tRNA modification GTPase MnmE.